The following is a 157-amino-acid chain: Probable succinate transporter subunit YjjB (157 aa).

Helical transmembrane passes span 15–35 (ILAA…VQAL), 50–70 (MILM…SMLV), 87–107 (VFTV…TAMI), and 121–141 (LMIT…ALSV).

It belongs to the ThrE exporter (TC 2.A.79) family. In terms of assembly, the transporter is composed of YjjB and YjjP.

The protein resides in the cell inner membrane. In terms of biological role, involved in succinate export with YjjP. Both proteins are required for export. In Shigella dysenteriae serotype 1 (strain Sd197), this protein is Probable succinate transporter subunit YjjB.